We begin with the raw amino-acid sequence, 463 residues long: ATP synthase subunit beta (463 aa).

152 to 159 (GGAGVGKT) lines the ATP pocket.

The protein belongs to the ATPase alpha/beta chains family. In terms of assembly, F-type ATPases have 2 components, CF(1) - the catalytic core - and CF(0) - the membrane proton channel. CF(1) has five subunits: alpha(3), beta(3), gamma(1), delta(1), epsilon(1). CF(0) has three main subunits: a(1), b(2) and c(9-12). The alpha and beta chains form an alternating ring which encloses part of the gamma chain. CF(1) is attached to CF(0) by a central stalk formed by the gamma and epsilon chains, while a peripheral stalk is formed by the delta and b chains.

The protein localises to the cell inner membrane. The enzyme catalyses ATP + H2O + 4 H(+)(in) = ADP + phosphate + 5 H(+)(out). Functionally, produces ATP from ADP in the presence of a proton gradient across the membrane. The catalytic sites are hosted primarily by the beta subunits. The protein is ATP synthase subunit beta of Shewanella oneidensis (strain ATCC 700550 / JCM 31522 / CIP 106686 / LMG 19005 / NCIMB 14063 / MR-1).